A 378-amino-acid polypeptide reads, in one-letter code: Spermidine/putrescine import ATP-binding protein PotA (378 aa).

An ABC transporter domain is found at 18–248 (VLLSGISKSF…PKNLFVAGFI (231 aa)). Residue 50-57 (GPSGCGKT) participates in ATP binding.

It belongs to the ABC transporter superfamily. Spermidine/putrescine importer (TC 3.A.1.11.1) family. In terms of assembly, the complex is composed of two ATP-binding proteins (PotA), two transmembrane proteins (PotB and PotC) and a solute-binding protein (PotD).

It is found in the cell inner membrane. The catalysed reaction is ATP + H2O + polyamine-[polyamine-binding protein]Side 1 = ADP + phosphate + polyamineSide 2 + [polyamine-binding protein]Side 1.. Functionally, part of the ABC transporter complex PotABCD involved in spermidine/putrescine import. Responsible for energy coupling to the transport system. This Salmonella paratyphi A (strain ATCC 9150 / SARB42) protein is Spermidine/putrescine import ATP-binding protein PotA.